Reading from the N-terminus, the 701-residue chain is Translation initiation factor IF-2 (701 aa).

The segment covering 48–62 (KIYKPEKAEQSEKSQ) has biased composition (basic and acidic residues). The segment at 48–123 (KIYKPEKAEQ…EPKEMPSKIT (76 aa)) is disordered. Composition is skewed to low complexity over residues 63–89 (QKNT…NNKP) and 97–109 (NNKN…NNKQ). Over residues 110 to 119 (PKQEEPKEMP) the composition is skewed to basic and acidic residues. The region spanning 203–372 (ERPAVVTIMG…VLTSEVQELK (170 aa)) is the tr-type G domain. Residues 212 to 219 (GHVDHGKT) form a G1 region. Residue 212–219 (GHVDHGKT) coordinates GTP. The tract at residues 237 to 241 (GITQH) is G2. Positions 258–261 (DTPG) are G3. Residues 258–262 (DTPGH) and 312–315 (NKID) contribute to the GTP site. The segment at 312 to 315 (NKID) is G4. The tract at residues 348-350 (SAL) is G5.

It belongs to the TRAFAC class translation factor GTPase superfamily. Classic translation factor GTPase family. IF-2 subfamily.

The protein resides in the cytoplasm. In terms of biological role, one of the essential components for the initiation of protein synthesis. Protects formylmethionyl-tRNA from spontaneous hydrolysis and promotes its binding to the 30S ribosomal subunits. Also involved in the hydrolysis of GTP during the formation of the 70S ribosomal complex. This Staphylococcus saprophyticus subsp. saprophyticus (strain ATCC 15305 / DSM 20229 / NCIMB 8711 / NCTC 7292 / S-41) protein is Translation initiation factor IF-2.